We begin with the raw amino-acid sequence, 649 residues long: Alpha-amylase (649 aa).

Residue E124 is the Nucleophile of the active site. D215 acts as the Proton donor in catalysis.

The protein belongs to the glycosyl hydrolase 57 family. As to quaternary structure, homodimer.

The catalysed reaction is Endohydrolysis of (1-&gt;4)-alpha-D-glucosidic linkages in polysaccharides containing three or more (1-&gt;4)-alpha-linked D-glucose units.. Its function is as follows. Displays a broad range of substrate specificity, with the capacity to hydrolyze carbohydrates as simple as maltotriose. This chain is Alpha-amylase (amyA), found in Pyrococcus furiosus (strain ATCC 43587 / DSM 3638 / JCM 8422 / Vc1).